The primary structure comprises 356 residues: MQPIPDVNQRIARISAHLHPPKYQMEESSVLRRANCRAKGGAPGFKVAILGAAGGIGQPLAMLMKMNPLVSVLHLYDVVNAPGVTADISHMDTGAVVRGFLGQQQLERALTGMDLVVIPAGVPRKPGMTRDDLFKINAGIVKTLCEGIAKCCPTAIVNLISNPVNSTVPIAAEVFKKAGTYDPKRLLGVTMLDVVRANTFVAEVLGLDPRDVNVPVVGGHAGVTILPLLSQVKPPSSFTQEEINYLTDRIQNGGTEVVEAKAGAGSATLSMAYAAVKFADACLRGLRGDAGVVECAFVSSQVTELPFFATKVRLGRNGIDEVYSLGPLNEYERIGLEKAKKELAGSIEKGVSFIRG.

The N-terminal 36 residues, 1–36 (MQPIPDVNQRIARISAHLHPPKYQMEESSVLRRANC), are a transit peptide targeting the glyoxysome. NAD(+)-binding positions include 51-57 (GAAGGIG) and Asp-77. Residues Arg-124 and Arg-130 each contribute to the substrate site. NAD(+) is bound by residues Asn-137 and 160–162 (ISN). Substrate contacts are provided by Asn-162 and Arg-196. His-220 serves as the catalytic Proton acceptor. Met-271 lines the NAD(+) pocket.

The protein belongs to the LDH/MDH superfamily. MDH type 1 family. Homodimer.

Its subcellular location is the glyoxysome. The catalysed reaction is (S)-malate + NAD(+) = oxaloacetate + NADH + H(+). In Cucumis sativus (Cucumber), this protein is Malate dehydrogenase, glyoxysomal (MDHG).